Consider the following 858-residue polypeptide: MQEQYRPQDIEQKVQEHWDNNKTFVVNEDPNKEKFYCLSMFPYPSGRLHMGHVRNYTIGDVVSRYQRLQGKNVMQPIGWDAFGLPAENAAVKNKTAPAPWTYENIEYMKNQLKLLGFGYDWSREFATCTPEYYRWEQEFFTKLYNKGLVYKKTSSVNWCPNDQTVLANEQVEDGCCWRCDTPVEQKKIPQWFIKITEYAQELLDDLDTLDGWPEMVKTMQRNWIGRSEGVELSFAVNGEEAPLEVYTTRPDTLMGVTYVGIAAGHPLAEKAAATNPELFAFTEECRNTKVAEAELATMEKKGMDTGLRAVHPLNGREVPIYVANFVLMDYGTGAVMAVPAHDQRDYEFATKYGLDIIPVIKPEDGSELNVSEEAYTEKGVLFDSGEFDGLAFQDAFDAIAAKLEAEGKGKKTVNFRLRDWGVSRQRYWGAPIPMVTTEDGEVHPVPADQLPVILPENVVMDGVTSPIKADKEWAKTTFNGEPALRETDTFDTFMESSWYYARYCSPQADDILDPEKANYWLPVDQYVGGIEHACMHLLYSRFFHKLLRDAGYVTSNEPFKQLLCQGMVLADAFHHTNEKGTKEWIAPTDVTIERDAKGRIEKAIDDQGREVQHSGMIKMSKSKNNGIDPQEMVDKFGADTVRLFMMFASPADMTLEWQESGVEGASRFLKRVWKLVHEHTNKGTVEALDVAALSGNQKALRRDVHKTIAKVSDDIGRRQTFNTAIAAIMELMNKLNKAPQESAQDRALLDEALKAVVVMLYPMTPHASFEMWEALGETDIDTATWPTFDKNALIEDEKTIVVMINGKLRAKLIVAADATEEQVKELGLKDENAIKFLDGLTIRKVIYVPGKLLNIVAN.

A 'HIGH' region motif is present at residues 42-52 (PYPSGRLHMGH). The short motif at 618–622 (KMSKS) is the 'KMSKS' region element. Lys-621 is an ATP binding site.

The protein belongs to the class-I aminoacyl-tRNA synthetase family.

It localises to the cytoplasm. The enzyme catalyses tRNA(Leu) + L-leucine + ATP = L-leucyl-tRNA(Leu) + AMP + diphosphate. The protein is Leucine--tRNA ligase of Photobacterium profundum (strain SS9).